The primary structure comprises 368 residues: Phosphate acyltransferase (368 aa).

Residues 338–368 (GDGGHDAGGAGTASPAPGHHAEPSAAQSSKA) are disordered.

The protein belongs to the PlsX family. In terms of assembly, homodimer. Probably interacts with PlsY.

It is found in the cytoplasm. The catalysed reaction is a fatty acyl-[ACP] + phosphate = an acyl phosphate + holo-[ACP]. The protein operates within lipid metabolism; phospholipid metabolism. In terms of biological role, catalyzes the reversible formation of acyl-phosphate (acyl-PO(4)) from acyl-[acyl-carrier-protein] (acyl-ACP). This enzyme utilizes acyl-ACP as fatty acyl donor, but not acyl-CoA. The polypeptide is Phosphate acyltransferase (Burkholderia ambifaria (strain MC40-6)).